Reading from the N-terminus, the 66-residue chain is Neurotoxin BmK AGP-SYPU1 (66 aa).

In terms of domain architecture, LCN-type CS-alpha/beta spans 2–64 (RDAYIAQNYN…KPIRIPGKCH (63 aa)). 4 disulfides stabilise this stretch: Cys-12–Cys-63, Cys-16–Cys-36, Cys-22–Cys-46, and Cys-26–Cys-48. The propeptide at 65-66 (RR) is removed by a carboxypeptidase.

As to expression, expressed by the venom gland.

The protein resides in the secreted. Functionally, alpha toxins bind voltage-independently at site-3 of sodium channels (Nav) and inhibit the inactivation of the activated channels, thereby blocking neuronal transmission. This toxin has a strong analgesic effect when administered to mice by intraperitoneal injection. The chain is Neurotoxin BmK AGP-SYPU1 from Olivierus martensii (Manchurian scorpion).